The sequence spans 758 residues: Probable serine/threonine-protein kinase HAL5-like (758 aa).

Disordered stretches follow at residues 1-170 (MGTV…SADD) and 189-252 (IDNA…HRGR). Over residues 22 to 57 (RSISGSIKSLFKPSSVQNSTPTVSPHESSPPLGNSD) the composition is skewed to polar residues. Basic and acidic residues predominate over residues 58–69 (NLKKLVDTKRAE). Low complexity predominate over residues 129–153 (SSPRQSSSTNDRSSITSATSSVTSA). Basic and acidic residues predominate over residues 216–226 (DKNFESSEYEI). Residues 227-247 (RSNSLSRIHSTPQNESPTVNN) show a composition bias toward polar residues. A Protein kinase domain is found at 442 to 744 (KSMGVVLGHG…IDQLLQSPWM (303 aa)). ATP-binding positions include 448–456 (LGHGAYGVV) and K485. The active-site Proton acceptor is the D595.

It belongs to the protein kinase superfamily. CAMK Ser/Thr protein kinase family. NPR/HAL subfamily. HAL5 sub-subfamily.

It carries out the reaction L-seryl-[protein] + ATP = O-phospho-L-seryl-[protein] + ADP + H(+). The catalysed reaction is L-threonyl-[protein] + ATP = O-phospho-L-threonyl-[protein] + ADP + H(+). This is Probable serine/threonine-protein kinase HAL5-like from Vanderwaltozyma polyspora (strain ATCC 22028 / DSM 70294 / BCRC 21397 / CBS 2163 / NBRC 10782 / NRRL Y-8283 / UCD 57-17) (Kluyveromyces polysporus).